The primary structure comprises 420 residues: Protein MucB (420 aa).

One can recognise a UmuC domain in the interval 2 to 187 (FALIDVNGMY…LPVAEVWGVG (186 aa)).

Belongs to the DNA polymerase type-Y family.

Its function is as follows. Involved in UV protection and mutation. The polypeptide is Protein MucB (mucB) (Escherichia coli).